A 143-amino-acid chain; its full sequence is Aspartate 1-decarboxylase (143 aa).

S25 functions as the Schiff-base intermediate with substrate; via pyruvic acid in the catalytic mechanism. S25 carries the pyruvic acid (Ser) modification. T57 lines the substrate pocket. Catalysis depends on Y58, which acts as the Proton donor. Substrate is bound at residue 73-75 (GAA).

This sequence belongs to the PanD family. As to quaternary structure, heterooctamer of four alpha and four beta subunits. The cofactor is pyruvate. Is synthesized initially as an inactive proenzyme, which is activated by self-cleavage at a specific serine bond to produce a beta-subunit with a hydroxyl group at its C-terminus and an alpha-subunit with a pyruvoyl group at its N-terminus.

The protein localises to the cytoplasm. The catalysed reaction is L-aspartate + H(+) = beta-alanine + CO2. The protein operates within cofactor biosynthesis; (R)-pantothenate biosynthesis; beta-alanine from L-aspartate: step 1/1. Its function is as follows. Catalyzes the pyruvoyl-dependent decarboxylation of aspartate to produce beta-alanine. This is Aspartate 1-decarboxylase from Mycolicibacterium paratuberculosis (strain ATCC BAA-968 / K-10) (Mycobacterium paratuberculosis).